Here is a 331-residue protein sequence, read N- to C-terminus: UDP-GalNAc:beta-1,3-N-acetylgalactosaminyltransferase 1 (331 aa).

Residues 1–20 (MAPAVLTAIPNRMSLRSLKW) are Cytoplasmic-facing. The chain crosses the membrane as a helical; Signal-anchor for type II membrane protein span at residues 21-43 (SLLLLSLLSFLVIWYLSLPHYNV). Topologically, residues 44-331 (IERVNWMYFY…VMLRNTTCHY (288 aa)) are lumenal. N72, N154, N198, N212, and N326 each carry an N-linked (GlcNAc...) asparagine glycan.

It belongs to the glycosyltransferase 31 family. Requires Mg(2+) as cofactor.

It is found in the golgi apparatus membrane. It carries out the reaction a globoside Gb3Cer (d18:1(4E)) + UDP-N-acetyl-alpha-D-galactosamine = a globoside Gb4Cer (d18:1(4E)) + UDP + H(+). Its pathway is protein modification; protein glycosylation. Functionally, transfers N-acetylgalactosamine onto globotriaosylceramide. Plays a critical role in preimplantation stage embryonic development. The chain is UDP-GalNAc:beta-1,3-N-acetylgalactosaminyltransferase 1 (B3galnt1) from Rattus norvegicus (Rat).